A 507-amino-acid chain; its full sequence is ATP synthase subunit alpha, chloroplastic (507 aa).

Gly170 to Thr177 is an ATP binding site.

This sequence belongs to the ATPase alpha/beta chains family. As to quaternary structure, F-type ATPases have 2 components, CF(1) - the catalytic core - and CF(0) - the membrane proton channel. CF(1) has five subunits: alpha(3), beta(3), gamma(1), delta(1), epsilon(1). CF(0) has four main subunits: a, b, b' and c.

The protein localises to the plastid. Its subcellular location is the chloroplast thylakoid membrane. The enzyme catalyses ATP + H2O + 4 H(+)(in) = ADP + phosphate + 5 H(+)(out). Its function is as follows. Produces ATP from ADP in the presence of a proton gradient across the membrane. The alpha chain is a regulatory subunit. This is ATP synthase subunit alpha, chloroplastic from Silene latifolia (White campion).